Here is a 156-residue protein sequence, read N- to C-terminus: MAKKKTKSPGTLAENRKARHDYNIEDTIEAGIALKGTEIKSIRRGSANLKDSYAQVKRGEMFINNMHIAPYEEGNRFNHDPLRSRKLLLHKKEIIKLGERTREIGYSLIPLKLYLKHGQCKVLLGVARGKKIHDKRQALKDKAMKRDVDRAIKDRY.

It belongs to the SmpB family.

It is found in the cytoplasm. Required for rescue of stalled ribosomes mediated by trans-translation. Binds to transfer-messenger RNA (tmRNA), required for stable association of tmRNA with ribosomes. tmRNA and SmpB together mimic tRNA shape, replacing the anticodon stem-loop with SmpB. tmRNA is encoded by the ssrA gene; the 2 termini fold to resemble tRNA(Ala) and it encodes a 'tag peptide', a short internal open reading frame. During trans-translation Ala-aminoacylated tmRNA acts like a tRNA, entering the A-site of stalled ribosomes, displacing the stalled mRNA. The ribosome then switches to translate the ORF on the tmRNA; the nascent peptide is terminated with the 'tag peptide' encoded by the tmRNA and targeted for degradation. The ribosome is freed to recommence translation, which seems to be the essential function of trans-translation. The chain is SsrA-binding protein from Staphylococcus haemolyticus (strain JCSC1435).